The primary structure comprises 425 residues: Adenylosuccinate synthetase (425 aa).

GTP contacts are provided by residues Gly12–Lys18 and Gly40–Thr42. Asp13 acts as the Proton acceptor in catalysis. 2 residues coordinate Mg(2+): Asp13 and Gly40. IMP contacts are provided by residues Asp13–Lys16, Asn38–His41, Thr130, Arg144, Gln224, Thr239, and Arg301. His41 acts as the Proton donor in catalysis. Thr297 to Arg303 contacts substrate. Residues Arg303, Lys329–Asp331, and Ser411–Ser413 each bind GTP.

This sequence belongs to the adenylosuccinate synthetase family. As to quaternary structure, homodimer. The cofactor is Mg(2+).

The protein resides in the cytoplasm. The enzyme catalyses IMP + L-aspartate + GTP = N(6)-(1,2-dicarboxyethyl)-AMP + GDP + phosphate + 2 H(+). Its pathway is purine metabolism; AMP biosynthesis via de novo pathway; AMP from IMP: step 1/2. Plays an important role in the de novo pathway of purine nucleotide biosynthesis. Catalyzes the first committed step in the biosynthesis of AMP from IMP. This chain is Adenylosuccinate synthetase, found in Wolbachia pipientis wMel.